A 228-amino-acid chain; its full sequence is UPF0758 protein CLB_3028 (228 aa).

Residues 106 to 228 (KISTPLDVSN…YVSMKEKGTI (123 aa)) enclose the MPN domain. Zn(2+) contacts are provided by His177, His179, and Asp190. A JAMM motif motif is present at residues 177 to 190 (HNHPSGDPTPSKED).

Belongs to the UPF0758 family.

This Clostridium botulinum (strain ATCC 19397 / Type A) protein is UPF0758 protein CLB_3028.